We begin with the raw amino-acid sequence, 286 residues long: uncharacterized protein (286 aa).

Residues 8–28 (PLSGFISSLIWWLLFFYLIMA) traverse the membrane as a helical segment.

To M.jannaschii MJ1495.

It is found in the membrane. This is an uncharacterized protein from Methanocaldococcus jannaschii (strain ATCC 43067 / DSM 2661 / JAL-1 / JCM 10045 / NBRC 100440) (Methanococcus jannaschii).